The chain runs to 150 residues: Large ribosomal subunit protein bL9 (150 aa).

Belongs to the bacterial ribosomal protein bL9 family.

In terms of biological role, binds to the 23S rRNA. The sequence is that of Large ribosomal subunit protein bL9 from Streptococcus sanguinis (strain SK36).